The chain runs to 435 residues: Tryptophan--tRNA ligase (435 aa).

Residues threonine 10–serine 12 and glycine 18–asparagine 19 contribute to the ATP site. The 'HIGH' region motif lies at threonine 11–asparagine 19. L-tryptophan is bound at residue aspartate 143. ATP contacts are provided by residues glycine 155 to aspartate 157, leucine 195, and lysine 202 to serine 206. The 'KMSKS' region signature appears at lysine 202–serine 206.

This sequence belongs to the class-I aminoacyl-tRNA synthetase family. In terms of assembly, homodimer.

It localises to the cytoplasm. The enzyme catalyses tRNA(Trp) + L-tryptophan + ATP = L-tryptophyl-tRNA(Trp) + AMP + diphosphate + H(+). In terms of biological role, catalyzes the attachment of tryptophan to tRNA(Trp). The sequence is that of Tryptophan--tRNA ligase from Xylella fastidiosa (strain Temecula1 / ATCC 700964).